Here is a 304-residue protein sequence, read N- to C-terminus: Ornithine carbamoyltransferase (304 aa).

Carbamoyl phosphate is bound by residues 47-50, Arg-98, and 125-128; these read STRT and HPCQ. L-ornithine is bound by residues Asn-156, Asp-221, and 225–226; that span reads SM. Residues 262-263 and Arg-290 contribute to the carbamoyl phosphate site; that span reads CL.

It belongs to the aspartate/ornithine carbamoyltransferase superfamily. OTCase family.

It is found in the cytoplasm. The enzyme catalyses carbamoyl phosphate + L-ornithine = L-citrulline + phosphate + H(+). It functions in the pathway amino-acid biosynthesis; L-arginine biosynthesis; L-arginine from L-ornithine and carbamoyl phosphate: step 1/3. Functionally, reversibly catalyzes the transfer of the carbamoyl group from carbamoyl phosphate (CP) to the N(epsilon) atom of ornithine (ORN) to produce L-citrulline. In Methanococcus aeolicus (strain ATCC BAA-1280 / DSM 17508 / OCM 812 / Nankai-3), this protein is Ornithine carbamoyltransferase.